The chain runs to 212 residues: NAD(P)H-quinone oxidoreductase subunit K, chloroplastic (212 aa).

Positions 43, 44, 108, and 139 each coordinate [4Fe-4S] cluster.

This sequence belongs to the complex I 20 kDa subunit family. In terms of assembly, NDH is composed of at least 16 different subunits, 5 of which are encoded in the nucleus. It depends on [4Fe-4S] cluster as a cofactor.

It is found in the plastid. Its subcellular location is the chloroplast thylakoid membrane. The enzyme catalyses a plastoquinone + NADH + (n+1) H(+)(in) = a plastoquinol + NAD(+) + n H(+)(out). It catalyses the reaction a plastoquinone + NADPH + (n+1) H(+)(in) = a plastoquinol + NADP(+) + n H(+)(out). NDH shuttles electrons from NAD(P)H:plastoquinone, via FMN and iron-sulfur (Fe-S) centers, to quinones in the photosynthetic chain and possibly in a chloroplast respiratory chain. The immediate electron acceptor for the enzyme in this species is believed to be plastoquinone. Couples the redox reaction to proton translocation, and thus conserves the redox energy in a proton gradient. The protein is NAD(P)H-quinone oxidoreductase subunit K, chloroplastic of Phaseolus vulgaris (Kidney bean).